A 588-amino-acid chain; its full sequence is Protein decapentaplegic (588 aa).

The signal sequence occupies residues 1–23 (MRAWLLLLAVLATFQTIVRVAST). A propeptide spanning residues 24 to 456 (EDISQRFIAA…DGRHKARSIR (433 aa)) is cleaved from the precursor. Residues 74-169 (FSEPASFSDS…STESHQSSSI (96 aa)) are disordered. Positions 96–119 (SKSDANRQFNEVHKPRTDQLENSK) are enriched in basic and acidic residues. N120 carries N-linked (GlcNAc...) asparagine glycosylation. Residues 140-153 (RSHHKKSHHHRSHQ) are compositionally biased toward basic residues. Residues 156–169 (QASASTESHQSSSI) show a composition bias toward low complexity. N-linked (GlcNAc...) asparagine glycans are attached at residues N342 and N377. The segment at 454–484 (SIRDVSGGEGGGKGGRNKRQPRRPTRRKNHD) is disordered. Residues 468-481 (GRNKRQPRRPTRRK) show a composition bias toward basic residues. 3 disulfides stabilise this stretch: C487/C553, C516/C585, and C520/C587. N529 carries N-linked (GlcNAc...) asparagine glycosylation.

This sequence belongs to the TGF-beta family. As to quaternary structure, heterodimers of scw/dpp are the active subunit, dpp/dpp homodimers elicit a basal response and scw/scw homodimers alone are ineffective in specifying a dorsal pattern. Component of a complex composed of dpp, sog and tsg. Interacts with nord and gbb; the interaction interferes with dpp secretion. As to expression, expressed in the dorsal region of the embryo, and becomes enriched in a dorsal midline stripe just prior to gastrulation. Expressed in midgut mesoderm and in two overlapping regions of the embryonic large intestine. Expressed in a long-range concentration gradient in the wing imaginal disk.

The protein resides in the secreted. Functionally, required during oogenesis for eggshell patterning and dorsal/ventral patterning of the embryo. Acts as a morphogen during embryogenesis to pattern the dorsal/ventral axis, specifying dorsal ectoderm and amnioserosa cell fate within the dorsal half of the embryo; this activity is antagonized by binding to sog and tsg. Induces the formation of visceral mesoderm and the heart in early embryos. Required later in embryogenesis for dorsal closure and patterning of the hindgut. Also functions postembryonically as a long-range morphogen during imaginal disk development; is responsible for the progression of the morphogenetic furrow during eye development. Patterns the wing imaginal disk along its anterior/posterior axis and has a role in positioning pro-veins. Also required to subdivide the wing disk along the proximal/distal axis into body wall (notum) and wing. Ensures the correct architecture of wing epithelial cells. Has multiple roles in the developing tracheal system, controlling directed tracheal cell migration during embryogenesis and later specifying the fate of fusion cells in the tracheal branches. Required for viability of larvae. Essential for the maintenance and division of germline stem cells in the ovary. Signals via the type I receptor tkv, the type II receptor punt, and in some tissues via the type I receptor sax, in a signaling cascade that leads to activation and repression of target genes. The chain is Protein decapentaplegic (dpp) from Drosophila melanogaster (Fruit fly).